A 276-amino-acid polypeptide reads, in one-letter code: Undecaprenyl-diphosphatase 1 (276 aa).

A run of 5 helical transmembrane segments spans residues 85-105 (MNVV…EKTI), 108-128 (VLFA…VILW), 187-207 (VATE…TLYE), 217-237 (VDSI…AFAC), and 253-273 (FAWY…SGWI).

The protein belongs to the UppP family.

It is found in the cell inner membrane. The enzyme catalyses di-trans,octa-cis-undecaprenyl diphosphate + H2O = di-trans,octa-cis-undecaprenyl phosphate + phosphate + H(+). Functionally, catalyzes the dephosphorylation of undecaprenyl diphosphate (UPP). Confers resistance to bacitracin. The protein is Undecaprenyl-diphosphatase 1 of Burkholderia thailandensis (strain ATCC 700388 / DSM 13276 / CCUG 48851 / CIP 106301 / E264).